Consider the following 369-residue polypeptide: Anhydro-N-acetylmuramic acid kinase (369 aa).

Position 12 to 19 (12 to 19) interacts with ATP; sequence GTSLDGVD.

This sequence belongs to the anhydro-N-acetylmuramic acid kinase family.

The catalysed reaction is 1,6-anhydro-N-acetyl-beta-muramate + ATP + H2O = N-acetyl-D-muramate 6-phosphate + ADP + H(+). The protein operates within amino-sugar metabolism; 1,6-anhydro-N-acetylmuramate degradation. Its pathway is cell wall biogenesis; peptidoglycan recycling. Catalyzes the specific phosphorylation of 1,6-anhydro-N-acetylmuramic acid (anhMurNAc) with the simultaneous cleavage of the 1,6-anhydro ring, generating MurNAc-6-P. Is required for the utilization of anhMurNAc either imported from the medium or derived from its own cell wall murein, and thus plays a role in cell wall recycling. The sequence is that of Anhydro-N-acetylmuramic acid kinase from Escherichia coli O81 (strain ED1a).